The primary structure comprises 261 residues: GTP cyclohydrolase FolE2 (261 aa).

This sequence belongs to the GTP cyclohydrolase IV family.

It carries out the reaction GTP + H2O = 7,8-dihydroneopterin 3'-triphosphate + formate + H(+). It functions in the pathway cofactor biosynthesis; 7,8-dihydroneopterin triphosphate biosynthesis; 7,8-dihydroneopterin triphosphate from GTP: step 1/1. Its function is as follows. Converts GTP to 7,8-dihydroneopterin triphosphate. This Herminiimonas arsenicoxydans protein is GTP cyclohydrolase FolE2.